A 485-amino-acid chain; its full sequence is Putative E3 ubiquitin-protein ligase makorin-4 (485 aa).

A compositionally biased stretch (low complexity) spans 1 to 32; sequence MAEAAAPGTTVTTSGAGAAAAEAAETAEAVSP. Positions 1-63 are disordered; sequence MAEAAAPGTT…GSDGSGGRGD (63 aa). The span at 45 to 63 shows a compositional bias: gly residues; it reads AGGGVGGSDGSDGSGGRGD. C3H1-type zinc fingers lie at residues 90–117, 124–146, and 243–270; these read WTKQ…HDLS, VCKY…HSKP, and ETKK…HGDL. Residues 271–298 are makorin-type Cys-His; it reads CDMCGLQVLHPMDAAQRSQHIQACIEAH. The RING-type zinc finger occupies 316–370; sequence CGICMEVVYEKANPNEHRFGILSNCNHTFCLKCIRKWRSAKEFESRIVKSCPQCR. The C3H1-type 4 zinc finger occupies 399–428; sequence AMSNKACKYFDEGRGSCPFGENCFYKHMYP.

It carries out the reaction S-ubiquitinyl-[E2 ubiquitin-conjugating enzyme]-L-cysteine + [acceptor protein]-L-lysine = [E2 ubiquitin-conjugating enzyme]-L-cysteine + N(6)-ubiquitinyl-[acceptor protein]-L-lysine.. Its pathway is protein modification; protein ubiquitination. In terms of biological role, may act as a E3 ubiquitin ligase catalyzing the covalent attachment of ubiquitin moieties onto substrate proteins. In Homo sapiens (Human), this protein is Putative E3 ubiquitin-protein ligase makorin-4 (MKRN4P).